The chain runs to 550 residues: C-type lectin domain family 4 member F (550 aa).

Over 1 to 42 the chain is Cytoplasmic; sequence MKEAELNRDVAKFCTDNQCVILQPQGLGPKSAAPMAPRTLRH. The chain crosses the membrane as a helical; Signal-anchor for type II membrane protein span at residues 43-69; that stretch reads VQAIVALVVVTVFFSLLALFVVVLQPW. The Extracellular portion of the chain corresponds to 70 to 550; the sequence is RQKQNEDHPV…DWSVARTDQS (481 aa). 6 N-linked (GlcNAc...) asparagine glycosylation sites follow: N87, N93, N115, N132, N209, and N255. The region spanning 438-538 is the C-type lectin domain; the sequence is NFCVSQGAHL…GTAYNWVCKK (101 aa). 2 cysteine pairs are disulfide-bonded: C440–C536 and C516–C528.

Kupffer cells.

Its subcellular location is the membrane. Receptor with an affinity for galactose and fucose. Could be involved in endocytosis. In Rattus norvegicus (Rat), this protein is C-type lectin domain family 4 member F (Clec4f).